Reading from the N-terminus, the 402-residue chain is CCA-adding enzyme (402 aa).

ATP is bound by residues G32 and R35. CTP-binding residues include G32 and R35. Positions 45 and 47 each coordinate Mg(2+). Residues R116, D159, R162, R165, and R168 each coordinate ATP. Positions 116, 159, 162, 165, and 168 each coordinate CTP.

Belongs to the tRNA nucleotidyltransferase/poly(A) polymerase family. Bacterial CCA-adding enzyme type 3 subfamily. As to quaternary structure, homodimer. Requires Mg(2+) as cofactor.

It catalyses the reaction a tRNA precursor + 2 CTP + ATP = a tRNA with a 3' CCA end + 3 diphosphate. The catalysed reaction is a tRNA with a 3' CCA end + 2 CTP + ATP = a tRNA with a 3' CCACCA end + 3 diphosphate. Catalyzes the addition and repair of the essential 3'-terminal CCA sequence in tRNAs without using a nucleic acid template. Adds these three nucleotides in the order of C, C, and A to the tRNA nucleotide-73, using CTP and ATP as substrates and producing inorganic pyrophosphate. tRNA 3'-terminal CCA addition is required both for tRNA processing and repair. Also involved in tRNA surveillance by mediating tandem CCA addition to generate a CCACCA at the 3' terminus of unstable tRNAs. While stable tRNAs receive only 3'-terminal CCA, unstable tRNAs are marked with CCACCA and rapidly degraded. This is CCA-adding enzyme from Streptococcus pyogenes serotype M6 (strain ATCC BAA-946 / MGAS10394).